A 1236-amino-acid polypeptide reads, in one-letter code: Complement factor H (1236 aa).

Positions 1 to 18 (MRFPAKIVWLVLWTVCVA) are cleaved as a signal peptide. 20 consecutive Sushi domains span residues 19 to 82 (EDCK…ICRK), 83 to 143 (KPCA…ICEV), 144 to 207 (VKCL…KCVE), 208 to 264 (IFCK…TCIE), 265 to 322 (ITCD…RCAW), 325 to 383 (CSYP…EEPC), 385 to 442 (RQCI…RCIR), 444 to 505 (KTCS…VCIK), 507 to 562 (CDRP…KAAC), 565 to 623 (RECS…TCKV), 627 to 685 (KSCA…VCIE), 688 to 745 (RTCG…QCIA), 750 to 804 (RKCK…DCNE), 809 to 866 (QLCP…RCIE), 868 to 936 (IGCS…QCVG), 937 to 994 (LPCG…DCIS), 995 to 1053 (TNCV…ACRD), 1054 to 1111 (VSCG…QCKD), 1114 to 1172 (GKCG…KCLE), and 1173 to 1235 (ACVI…YPRC). Disulfide bonds link Cys21-Cys66, Cys52-Cys80, Cys85-Cys129, Cys114-Cys141, Cys146-Cys192, Cys178-Cys205, Cys210-Cys251, Cys237-Cys262, Cys267-Cys309, Cys294-Cys320, Cys325-Cys372, Cys355-Cys383, Cys387-Cys429, Cys414-Cys440, Cys446-Cys492, Cys475-Cys503, Cys507-Cys551, Cys534-Cys562, Cys567-Cys609, Cys595-Cys621, Cys629-Cys672, Cys658-Cys683, Cys690-Cys732, Cys718-Cys743, Cys752-Cys791, Cys780-Cys802, Cys811-Cys853, Cys839-Cys864, Cys870-Cys923, Cys909-Cys934, Cys939-Cys981, Cys967-Cys992, Cys997-Cys1040, Cys1026-Cys1051, Cys1056-Cys1098, Cys1084-Cys1109, Cys1116-Cys1159, Cys1145-Cys1170, Cys1174-Cys1225, and Cys1208-Cys1235. 2 positions are modified to sulfotyrosine: Tyr168 and Tyr170. Sulfotyrosine occurs at positions 465 and 473. Sulfotyrosine is present on residues Tyr575, Tyr579, and Tyr585. Asn775 carries N-linked (GlcNAc...) asparagine glycosylation. The N-linked (GlcNAc...) asparagine glycan is linked to Asn1100.

Homodimer. Also forms homooligomers. Interacts with complement protein C3b; this interaction inhibits complement activation. Interacts with complement protein C3d. Interacts with CR3/ITGAM; this interaction mediates adhesion of neutrophils to pathogens leading to pathogen clearance. Post-translationally, sulfated on tyrosine residues. In terms of tissue distribution, CFH is one of the most abundant complement components in blood where the liver is the major source of CFH protein in vivo. in addition, CFH is secreted by additional cell types including monocytes, fibroblasts, or endothelial cells.

The protein localises to the secreted. Functionally, glycoprotein that plays an essential role in maintaining a well-balanced immune response by modulating complement activation. Acts as a soluble inhibitor of complement, where its binding to self markers such as glycan structures prevents complement activation and amplification on cell surfaces. Accelerates the decay of the complement alternative pathway (AP) C3 convertase C3bBb, thus preventing local formation of more C3b, the central player of the complement amplification loop. As a cofactor of the serine protease factor I, CFH also regulates proteolytic degradation of already-deposited C3b. In addition, mediates several cellular responses through interaction with specific receptors. For example, interacts with CR3/ITGAM receptor and thereby mediates the adhesion of human neutrophils to different pathogens. In turn, these pathogens are phagocytosed and destroyed. In Bos taurus (Bovine), this protein is Complement factor H (CFH).